The following is a 358-amino-acid chain: E3 ubiquitin-protein ligase RFI2 (358 aa).

Residues 1–34 are disordered; sequence MAGAKDSGCDDDLRIAGGCDPGKRGNPEDSSSPV. An RING-type; atypical zinc finger spans residues 38–83; sequence CSICLESVLDDGTRSKAKLQCGHQFHLDCIGSAFNMKGAMQCPNCR. Disordered stretches follow at residues 174 to 201 and 248 to 313; these read GPAA…DHFH and SNQR…DQNV. Residues 187–201 are compositionally biased toward basic and acidic residues; that stretch reads TDDHPWNSHSNDHFH. The span at 248-266 shows a compositional bias: polar residues; that stretch reads SNQRSSPAINSYQGSSTQM. Positions 299–309 are enriched in pro residues; that stretch reads LPPPPPPPPMP.

The protein resides in the nucleus. The catalysed reaction is S-ubiquitinyl-[E2 ubiquitin-conjugating enzyme]-L-cysteine + [acceptor protein]-L-lysine = [E2 ubiquitin-conjugating enzyme]-L-cysteine + N(6)-ubiquitinyl-[acceptor protein]-L-lysine.. It participates in protein modification; protein ubiquitination. Its function is as follows. Mediates phytochrome (phyA and phyB)-controlled seedling deetiolation responses such as hypocotyl elongation in response to red and far-red light. Required for light-induced expression of LHCB3 and CHALCONE SYNTHASE (CHS). Negatively regulates CONSTANS (CO) and FLOWERING LOCUS T (FT) expression and photoperiodic flowering. In Arabidopsis thaliana (Mouse-ear cress), this protein is E3 ubiquitin-protein ligase RFI2.